Here is a 681-residue protein sequence, read N- to C-terminus: MADPSSYRPKPGEIPDSPGVYKFRDEHHRVIYVGKAKSLRQRLASYFQDLAGLHPRTRTMVTTAASVEWTVVSTEVEALQLEYSWIKEYDPRFNVKYRDDKSYPYLAVTMNEEFPRVQVMRGHKRKGVRYFGPYGHAWAIRDTVDLLLRVFPVRTCSAGVFKNAARTGRPCLLGYIGKCSAPCVERVSAEEHRELAEEFCDFMAGRTGTYIRRLERQMTDAAEEMEYEKAARLRDDIGALKKAMEKNAVVLADATDADLIAVAEDELEAAVQIFHVRGGRVRGQRGWVTDKVEAVTTADLVEHALQQLYGEETGDSVPKEVLVPALPDPVEPVQEWLTGRRGSIVSLRIPQRGDKKSLMETVQRNAQQSLALHKTKRASDLTTRSRALEEIAEALDLDSAPLRIECYDISHLQGDDVVASMVVFEDGLQRKSEYRRFQIKSFEGQDDVRSMHEVITRRFRRYLSEKERTGEWADGDLKDGELKDDEGRPKRFAYPPQLVVVDGGQPQVAAAKRALDELGIDDIAVCGLAKRLEEVWLPDDGDPVVLPRTSEGLYLLQRVRDEAHRFAITYQRTKRAKRFRASPLDDVAGLGETRKQALIKHFGSVKKLRSATIDQICEVPGIGRKTAETIAVAFAQAAPAVPAVNTATGEIMEDEEPGTTAGSSQEPVSAGTSDERRGQET.

The 80-residue stretch at 16–95 (DSPGVYKFRD…IKEYDPRFNV (80 aa)) folds into the GIY-YIG domain. The UVR domain occupies 208-243 (GTYIRRLERQMTDAAEEMEYEKAARLRDDIGALKKA). The disordered stretch occupies residues 650–681 (EIMEDEEPGTTAGSSQEPVSAGTSDERRGQET). The segment covering 660–672 (TAGSSQEPVSAGT) has biased composition (polar residues).

The protein belongs to the UvrC family. Interacts with UvrB in an incision complex.

The protein resides in the cytoplasm. Its function is as follows. The UvrABC repair system catalyzes the recognition and processing of DNA lesions. UvrC both incises the 5' and 3' sides of the lesion. The N-terminal half is responsible for the 3' incision and the C-terminal half is responsible for the 5' incision. This chain is UvrABC system protein C, found in Streptomyces avermitilis (strain ATCC 31267 / DSM 46492 / JCM 5070 / NBRC 14893 / NCIMB 12804 / NRRL 8165 / MA-4680).